An 825-amino-acid chain; its full sequence is Interleukin-4 receptor subunit alpha (825 aa).

An N-terminal signal peptide occupies residues 1–25 (MGWLCSGLLFPVSCLVLLQVASSGN). Over 26-232 (MKVLQEPTCV…NSYREPFEQH (207 aa)) the chain is Extracellular. Residues cysteine 34 and cysteine 44 are joined by a disulfide bond. An N-linked (GlcNAc...) asparagine glycan is attached at asparagine 53. An intrachain disulfide couples cysteine 74 to cysteine 86. 5 N-linked (GlcNAc...) asparagine glycosylation sites follow: asparagine 98, asparagine 128, asparagine 134, asparagine 176, and asparagine 209. A Fibronectin type-III domain is found at 125–224 (APGNLTVHTN…WSPSTKWHNS (100 aa)). A WSXWS motif motif is present at residues 212–216 (WSEWS). A helical transmembrane segment spans residues 233–256 (LLLGVSVSCIVILAVCLLCYVSIT). At 257–825 (KIKKEWWDQI…SVGPTYMRVS (569 aa)) the chain is on the cytoplasmic side. Residues 262–270 (WWDQIPNPA) carry the Box 1 motif motif. Disordered regions lie at residues 373–397 (EEEEVEEEKGSFCASPESSRDDFQE) and 433–485 (LPPS…LTCT). The required for IRS1 activation and IL4-induced cell growth stretch occupies residues 437 to 557 (GSTSAHMPWD…ETWEQILRRN (121 aa)). Polar residues predominate over residues 475-485 (PTQSPDNLTCT). Tyrosine 497, tyrosine 575, tyrosine 603, and tyrosine 631 each carry phosphotyrosine. A required for IL4-induced gene expression region spans residues 558-657 (VLQHGAAAAP…VPVPLFTFGL (100 aa)). The interval 651-703 (PLFTFGLDREPPRSPQSSHLPSSSPEHLGLEPGEKVEDMPKPPLPQEQATDPL) is disordered. Over residues 665 to 677 (PQSSHLPSSSPEH) the composition is skewed to low complexity. The span at 678–690 (LGLEPGEKVEDMP) shows a compositional bias: basic and acidic residues. An ITIM motif motif is present at residues 711-716 (IVYSAL). Positions 782 to 809 (PSGISEKSKSSSSFHPAPGNAQSSSQTP) are disordered.

This sequence belongs to the type I cytokine receptor family. Type 4 subfamily. The functional IL4 receptor is formed by initial binding of IL4 to IL4R. Subsequent recruitment to the complex of the common gamma chain, in immune cells, creates a type I receptor and, in non-immune cells, of IL13RA1 forms a type II receptor. IL4R can also interact with the IL13/IL13RA1 complex to form a similar type II receptor. Interacts with PIK3C3. Interacts with the SH2-containing phosphatases, PTPN6/SHIP1, PTPN11/SHIP2 and INPP5D/SHIP. Interacts with JAK1 through a Box 1-containing region; inhibited by SOCS5. Interacts with SOCS5; inhibits IL4 signaling. Interacts with JAK3. Interacts with CLM1. Interacts with IL13RA2. Post-translationally, on IL4 binding, phosphorylated on C-terminal tyrosine residues. Phosphorylation on any one of tyrosine residues, Tyr-575, Tyr-603 or Tyr-631, is required for STAT6-induced gene induction. The soluble form (sIL4R/IL4BP) can also be produced by proteolytic cleavage at the cell surface (shedding) by a metalloproteinase. Isoform 1 and isoform 2 are highly expressed in activated T-cells.

It is found in the cell membrane. It localises to the secreted. Functionally, receptor for both interleukin 4 and interleukin 13. Couples to the JAK1/2/3-STAT6 pathway. The IL4 response is involved in promoting Th2 differentiation. The IL4/IL13 responses are involved in regulating IgE production and, chemokine and mucus production at sites of allergic inflammation. In certain cell types, can signal through activation of insulin receptor substrates, IRS1/IRS2. Its function is as follows. Soluble IL4R (sIL4R) inhibits IL4-mediated cell proliferation and IL5 up-regulation by T-cells. This is Interleukin-4 receptor subunit alpha (IL4R) from Homo sapiens (Human).